Reading from the N-terminus, the 173-residue chain is ATP synthase subunit b (173 aa).

The chain crosses the membrane as a helical span at residues 12–32 (LDVNPGLVVWTLVTFLVVVLV).

Belongs to the ATPase B chain family. As to quaternary structure, F-type ATPases have 2 components, F(1) - the catalytic core - and F(0) - the membrane proton channel. F(1) has five subunits: alpha(3), beta(3), gamma(1), delta(1), epsilon(1). F(0) has three main subunits: a(1), b(2) and c(10-14). The alpha and beta chains form an alternating ring which encloses part of the gamma chain. F(1) is attached to F(0) by a central stalk formed by the gamma and epsilon chains, while a peripheral stalk is formed by the delta and b chains.

The protein resides in the cell inner membrane. In terms of biological role, f(1)F(0) ATP synthase produces ATP from ADP in the presence of a proton or sodium gradient. F-type ATPases consist of two structural domains, F(1) containing the extramembraneous catalytic core and F(0) containing the membrane proton channel, linked together by a central stalk and a peripheral stalk. During catalysis, ATP synthesis in the catalytic domain of F(1) is coupled via a rotary mechanism of the central stalk subunits to proton translocation. Component of the F(0) channel, it forms part of the peripheral stalk, linking F(1) to F(0). In Leptospira interrogans serogroup Icterohaemorrhagiae serovar copenhageni (strain Fiocruz L1-130), this protein is ATP synthase subunit b.